The primary structure comprises 149 residues: Transcriptional repressor NrdR (149 aa).

The segment at 3-34 (CPFCFAVDTKVIDSRLVGGGSSVRRRRQCLVC) is a zinc-finger region. In terms of domain architecture, ATP-cone spans 49 to 139 (PRVVKSNDVR…VYRSFEDIKE (91 aa)).

This sequence belongs to the NrdR family. Zn(2+) serves as cofactor.

Negatively regulates transcription of bacterial ribonucleotide reductase nrd genes and operons by binding to NrdR-boxes. This Shigella boydii serotype 18 (strain CDC 3083-94 / BS512) protein is Transcriptional repressor NrdR.